We begin with the raw amino-acid sequence, 944 residues long: Thyroid peroxidase (944 aa).

Residues 1 to 30 (MVGLVPAGSAWGGRALAVLGVTLLVALARG) form the signal peptide. At 31-858 (LLPFFLGGRD…SGRLPKASLV (828 aa)) the chain is on the extracellular side. A glycan (N-linked (GlcNAc...) asparagine) is linked at asparagine 141. The cysteines at positions 154 and 170 are disulfide-linked. Aspartate 250 serves as a coordination point for heme b. Histidine 251 (proton acceptor) is an active-site residue. A Ca(2+)-binding site is contributed by aspartate 252. Cystine bridges form between cysteine 271/cysteine 281 and cysteine 275/cysteine 295. Asparagine 316 is a glycosylation site (N-linked (GlcNAc...) asparagine). Ca(2+) contacts are provided by threonine 330, phenylalanine 332, aspartate 334, and serine 336. Asparagine 351 carries an N-linked (GlcNAc...) asparagine glycan. The heme b site is built by glutamate 408 and histidine 503. 7 cysteine pairs are disulfide-bonded: cysteine 606–cysteine 663, cysteine 704–cysteine 729, cysteine 750–cysteine 790, cysteine 776–cysteine 802, cysteine 808–cysteine 822, cysteine 816–cysteine 831, and cysteine 833–cysteine 846. Asparagine 623 is a glycosylation site (N-linked (GlcNAc...) asparagine). In terms of domain architecture, Sushi spans 748–804 (DACGLPDSLDNGDVVLCGEAGRRVLVFSCRHGFKLQGPEQVACSPRGGAVRAPVCRD). The region spanning 804-847 (DINECEDASHPPCHGSARCRNTKGGFRCECTDPAVLGEDGTTCV) is the EGF-like; calcium-binding domain. A helical membrane pass occupies residues 859–879 (SIALGIVLVVGLAGLTWTLVC). The Cytoplasmic portion of the chain corresponds to 880–944 (RWAHAGRKAS…RSHVAQGSPA (65 aa)). The interval 895–944 (LGGRGAPPPGRGAGQDGASGSLVPPLGPQGRTRAVDPTSSRSHVAQGSPA) is disordered. Over residues 931-944 (PTSSRSHVAQGSPA) the composition is skewed to polar residues.

It belongs to the peroxidase family. XPO subfamily. Interacts with DUOX1, DUOX2 and CYBA. Requires Ca(2+) as cofactor. Heme b is required as a cofactor. In terms of processing, heme is covalently bound through a H(2)O(2)-dependent autocatalytic process. Heme insertion is important for the delivery of protein at the cell surface. Cleaved in its N-terminal part.

It is found in the membrane. It catalyses the reaction 2 iodide + H2O2 + 2 H(+) = diiodine + 2 H2O. The enzyme catalyses [thyroglobulin]-L-tyrosine + iodide + H2O2 + H(+) = [thyroglobulin]-3-iodo-L-tyrosine + 2 H2O. The catalysed reaction is [thyroglobulin]-3-iodo-L-tyrosine + iodide + H2O2 + H(+) = [thyroglobulin]-3,5-diiodo-L-tyrosine + 2 H2O. It carries out the reaction 2 [thyroglobulin]-3,5-diiodo-L-tyrosine + H2O2 = [thyroglobulin]-L-thyroxine + [thyroglobulin]-dehydroalanine + 2 H2O. It catalyses the reaction [thyroglobulin]-3-iodo-L-tyrosine + [thyroglobulin]-3,5-diiodo-L-tyrosine + H2O2 = [thyroglobulin]-3,3',5-triiodo-L-thyronine + [thyroglobulin]-dehydroalanine + 2 H2O. It participates in hormone biosynthesis; thyroid hormone biosynthesis. Functionally, iodination and coupling of the hormonogenic tyrosines in thyroglobulin to yield the thyroid hormones T(3) and T(4). This chain is Thyroid peroxidase (TPO), found in Canis lupus familiaris (Dog).